The primary structure comprises 80 residues: Conotoxin Vi6.2 (80 aa).

Residues 1 to 22 form the signal peptide; it reads MKLTCVLITTVLFLTASQLITA. A propeptide spanning residues 23 to 47 is cleaved from the precursor; the sequence is DYSRDKRQYRAVRLRDEMRNFKGAR. Disulfide bonds link C49/C62, C56/C67, and C61/C77. 4-hydroxyproline is present on residues P60 and P63.

The protein belongs to the conotoxin O1 superfamily. Expressed by the venom duct.

It localises to the secreted. Its function is as follows. Ion channel inhibitor that inhibits the increase in intracellular calcium upon depolarization in DRG neurons. In vivo, both intraperitoneal and intracranial injections into mice induce hyperactivity. This is Conotoxin Vi6.2 from Conus virgo (Virgin cone).